The following is a 282-amino-acid chain: MDAVEPGGRGWASMLACRLWKAISRALFAEFLATGLYVFFGVGSVMRWPTALPSVLQIAITFNLVTAMAVQVTWKASGAHANPAVTLAFLVGSHISLPRAVAYVAAQLVGATVGAALLYGVMPGDIRETLGINVVRNSVSTGQAVAVELLLTLQLVLCVFASTDSRQTSGSPATMIGISVALGHLIGIHFTGCSMNPARSFGPAIIIGKFTVHWVFWVGPLMGALLASLIYNFVLFPDTKTLAQRLAILTGTVEVGTGAGAGAEPLKKESQPGSGAVEMESV.

Over 1–25 the chain is Cytoplasmic; sequence MDAVEPGGRGWASMLACRLWKAISR. Residues 26–46 traverse the membrane as a helical segment; it reads ALFAEFLATGLYVFFGVGSVM. The Extracellular portion of the chain corresponds to 47–54; the sequence is RWPTALPS. The chain crosses the membrane as a helical span at residues 55-73; it reads VLQIAITFNLVTAMAVQVT. Topologically, residues 74-78 are cytoplasmic; the sequence is WKASG. The discontinuously helical intramembrane region spans 79 to 88; it reads AHANPAVTLA. An NPA 1 motif is present at residues 82 to 84; that stretch reads NPA. The Cytoplasmic portion of the chain corresponds to 89-99; it reads FLVGSHISLPR. The helical transmembrane segment at 100–121 threads the bilayer; the sequence is AVAYVAAQLVGATVGAALLYGV. Topologically, residues 122–141 are extracellular; that stretch reads MPGDIRETLGINVVRNSVST. A helical membrane pass occupies residues 142–162; the sequence is GQAVAVELLLTLQLVLCVFAS. Residues 163 to 168 are Cytoplasmic-facing; the sequence is TDSRQT. The chain crosses the membrane as a helical span at residues 169-188; the sequence is SGSPATMIGISVALGHLIGI. Residues 189–192 lie on the Extracellular side of the membrane; it reads HFTG. Positions 193–205 form an intramembrane region, discontinuously helical; that stretch reads CSMNPARSFGPAI. The NPA 2 motif lies at 196 to 198; sequence NPA. Topologically, residues 206–213 are extracellular; the sequence is IIGKFTVH. Residues 214-234 traverse the membrane as a helical segment; the sequence is WVFWVGPLMGALLASLIYNFV. Residues 235 to 282 are Cytoplasmic-facing; it reads LFPDTKTLAQRLAILTGTVEVGTGAGAGAEPLKKESQPGSGAVEMESV. The segment at 260–282 is disordered; that stretch reads GAGAEPLKKESQPGSGAVEMESV.

The protein belongs to the MIP/aquaporin (TC 1.A.8) family. As to quaternary structure, homotetramer; each monomer provides an independent solute pore.

Its subcellular location is the cytoplasmic vesicle membrane. It carries out the reaction nitrate(in) = nitrate(out). It catalyses the reaction iodide(out) = iodide(in). The enzyme catalyses bromide(in) = bromide(out). The catalysed reaction is chloride(in) = chloride(out). It carries out the reaction Na(+)(in) = Na(+)(out). It catalyses the reaction H2O(in) = H2O(out). The enzyme catalyses CO2(out) = CO2(in). The catalysed reaction is NH4(+)(in) = NH4(+)(out). Aquaporins form homotetrameric transmembrane channels, with each monomer independently mediating water transport across the plasma membrane along its osmotic gradient. Unlike classical aquaporins, AQP6 is an intracellular channel with selective anion permeability, particularly for nitrate, and exhibits very low water permeability. It may also facilitate the transport of gases, such as CO2 and NH4(+), as demonstrated in vitro. This Homo sapiens (Human) protein is Aquaporin-6.